A 69-amino-acid polypeptide reads, in one-letter code: Ribosome modulation factor (69 aa).

This sequence belongs to the ribosome modulation factor family.

The protein resides in the cytoplasm. Its function is as follows. During stationary phase, converts 70S ribosomes to an inactive dimeric form (100S ribosomes). In Hahella chejuensis (strain KCTC 2396), this protein is Ribosome modulation factor.